Reading from the N-terminus, the 572-residue chain is Arginine--tRNA ligase (572 aa).

The 'HIGH' region motif lies at 122–132 (PNLAKEMHVGH).

The protein belongs to the class-I aminoacyl-tRNA synthetase family. In terms of assembly, monomer.

Its subcellular location is the cytoplasm. It catalyses the reaction tRNA(Arg) + L-arginine + ATP = L-arginyl-tRNA(Arg) + AMP + diphosphate. The protein is Arginine--tRNA ligase of Neisseria gonorrhoeae (strain ATCC 700825 / FA 1090).